A 124-amino-acid chain; its full sequence is Type-4 ice-structuring protein (124 aa).

An N-terminal signal peptide occupies residues 1-20 (MKFSLIAAVALLALAQGSFA). Position 21 is a pyrrolidone carboxylic acid (Q21).

It belongs to the apolipoprotein A1/A4/E family.

It localises to the secreted. Antifreeze proteins lower the blood freezing point. The polypeptide is Type-4 ice-structuring protein (Paralichthys olivaceus (Bastard halibut)).